The sequence spans 275 residues: Phosphonates import ATP-binding protein PhnC (275 aa).

The region spanning 2 to 246 (LKIENLTKRY…ALTEIYGEEE (245 aa)) is the ABC transporter domain. An ATP-binding site is contributed by 35–42 (GPSGAGKS).

Belongs to the ABC transporter superfamily. Phosphonates importer (TC 3.A.1.9.1) family. The complex is composed of two ATP-binding proteins (PhnC), two transmembrane proteins (PhnE) and a solute-binding protein (PhnD).

The protein resides in the cell inner membrane. The enzyme catalyses phosphonate(out) + ATP + H2O = phosphonate(in) + ADP + phosphate + H(+). Part of the ABC transporter complex PhnCDE involved in phosphonates import. Responsible for energy coupling to the transport system. This Wolinella succinogenes (strain ATCC 29543 / DSM 1740 / CCUG 13145 / JCM 31913 / LMG 7466 / NCTC 11488 / FDC 602W) (Vibrio succinogenes) protein is Phosphonates import ATP-binding protein PhnC.